The chain runs to 645 residues: 1,4-alpha-glucan branching enzyme GlgB (645 aa).

Asp309 acts as the Nucleophile in catalysis. The active-site Proton donor is the Glu352. The tract at residues 619 to 645 is disordered; that stretch reads VKTRKGSKKQDGSKTKVRSNVTSRGKR. Over residues 636 to 645 the composition is skewed to polar residues; it reads RSNVTSRGKR.

It belongs to the glycosyl hydrolase 13 family. GlgB subfamily. As to quaternary structure, monomer.

The catalysed reaction is Transfers a segment of a (1-&gt;4)-alpha-D-glucan chain to a primary hydroxy group in a similar glucan chain.. It participates in glycan biosynthesis; glycogen biosynthesis. Its function is as follows. Catalyzes the formation of the alpha-1,6-glucosidic linkages in glycogen by scission of a 1,4-alpha-linked oligosaccharide from growing alpha-1,4-glucan chains and the subsequent attachment of the oligosaccharide to the alpha-1,6 position. The sequence is that of 1,4-alpha-glucan branching enzyme GlgB from Bacillus cereus (strain ATCC 14579 / DSM 31 / CCUG 7414 / JCM 2152 / NBRC 15305 / NCIMB 9373 / NCTC 2599 / NRRL B-3711).